A 248-amino-acid chain; its full sequence is 3-deoxy-manno-octulosonate cytidylyltransferase (248 aa).

Belongs to the KdsB family.

It is found in the cytoplasm. The enzyme catalyses 3-deoxy-alpha-D-manno-oct-2-ulosonate + CTP = CMP-3-deoxy-beta-D-manno-octulosonate + diphosphate. It participates in nucleotide-sugar biosynthesis; CMP-3-deoxy-D-manno-octulosonate biosynthesis; CMP-3-deoxy-D-manno-octulosonate from 3-deoxy-D-manno-octulosonate and CTP: step 1/1. The protein operates within bacterial outer membrane biogenesis; lipopolysaccharide biosynthesis. Its function is as follows. Activates KDO (a required 8-carbon sugar) for incorporation into bacterial lipopolysaccharide in Gram-negative bacteria. In Leptospira interrogans serogroup Icterohaemorrhagiae serovar copenhageni (strain Fiocruz L1-130), this protein is 3-deoxy-manno-octulosonate cytidylyltransferase.